A 284-amino-acid chain; its full sequence is 4-diphosphocytidyl-2-C-methyl-D-erythritol kinase (284 aa).

The active site involves Lys14. 98–108 (PMGGGLGGGSS) lines the ATP pocket. Asp140 is a catalytic residue.

Belongs to the GHMP kinase family. IspE subfamily.

It catalyses the reaction 4-CDP-2-C-methyl-D-erythritol + ATP = 4-CDP-2-C-methyl-D-erythritol 2-phosphate + ADP + H(+). It functions in the pathway isoprenoid biosynthesis; isopentenyl diphosphate biosynthesis via DXP pathway; isopentenyl diphosphate from 1-deoxy-D-xylulose 5-phosphate: step 3/6. Functionally, catalyzes the phosphorylation of the position 2 hydroxy group of 4-diphosphocytidyl-2C-methyl-D-erythritol. This Shewanella putrefaciens (strain CN-32 / ATCC BAA-453) protein is 4-diphosphocytidyl-2-C-methyl-D-erythritol kinase.